The following is a 1088-amino-acid chain: Adenylate-forming reductase Nps10 (1088 aa).

The interval Met-1–Gln-22 is disordered. Positions Phe-38–Ile-451 are adenylation (A) domain. AMP-binding positions include His-261, Asn-357–Leu-358, Thr-362, and Ile-443–Arg-446. Residues Ala-586 to Ala-668 enclose the Carrier domain. Residue Ser-621 is modified to O-(pantetheine 4'-phosphoryl)serine. Residues Leu-712 to Ile-951 are reductase (R) domain. NADP(+) contacts are provided by residues Thr-716 to Leu-719, Asn-804 to Trp-806, Tyr-875, and Lys-879.

Belongs to the adenylate-forming reductase family.

Functionally, adenylate-forming reductase, a natural product biosynthesis enzyme that resembles non-ribosomal peptide synthetases, yet serves to modify one substrate, rather than to condense two or more building blocks. The A-domain preferentially accepts phenylpyruvic acid and benzoic acid as substrate. The natural product of the enzyme is not yet known. This is Adenylate-forming reductase Nps10 from Heterobasidion annosum (Root rot fungus).